A 274-amino-acid polypeptide reads, in one-letter code: Glutamate racemase (274 aa).

Residues 10–11 (DS) and 42–43 (YG) each bind substrate. Cysteine 73 (proton donor/acceptor) is an active-site residue. Residue 74-75 (NT) participates in substrate binding. Cysteine 184 (proton donor/acceptor) is an active-site residue. Residue 185–186 (TH) coordinates substrate.

It belongs to the aspartate/glutamate racemases family.

It carries out the reaction L-glutamate = D-glutamate. It participates in cell wall biogenesis; peptidoglycan biosynthesis. Provides the (R)-glutamate required for cell wall biosynthesis. This Latilactobacillus sakei subsp. sakei (strain 23K) (Lactobacillus sakei subsp. sakei) protein is Glutamate racemase.